The sequence spans 549 residues: Polynucleotide 5'-hydroxyl-kinase nol-9 (549 aa).

Residue 190–197 (GHKGAGKS) coordinates ATP.

It belongs to the Clp1 family. NOL9/GRC3 subfamily.

It is found in the nucleus. Its subcellular location is the nucleolus. Functionally, polynucleotide 5'-kinase involved in rRNA processing. This chain is Polynucleotide 5'-hydroxyl-kinase nol-9 (nol-9), found in Caenorhabditis elegans.